Here is a 711-residue protein sequence, read N- to C-terminus: Polyribonucleotide nucleotidyltransferase (711 aa).

The FFRR loop; important for RNA binding stretch occupies residues 77–80 (FFRR). Residues 327–331 (LDVRT) form an interaction with RNase E region. 2 residues coordinate Mg(2+): Asp-486 and Asp-492. In terms of domain architecture, KH spans 553-612 (PRIHTIKINPDKIKDVIGKGGSVIRALTEETGTTIEIEDDGTVKIAATDGEKAKHAIRRI). Positions 622–690 (GRVYTGKVTR…RQGRIRLSIK (69 aa)) constitute an S1 motif domain. The interval 689-711 (IKEATEQSQPAAAPEAPAAEQGE) is disordered. Positions 694 to 711 (EQSQPAAAPEAPAAEQGE) are enriched in low complexity.

This sequence belongs to the polyribonucleotide nucleotidyltransferase family. In terms of assembly, component of the RNA degradosome, which is a multiprotein complex involved in RNA processing and mRNA degradation. Interacts with RNase E (rne). Homotrimer. The homotrimer forms a ring-like structure with a central channel, where RNA molecules can bind. RNA molecules bind between neighboring subunits. Might interact with YicC. Mg(2+) is required as a cofactor. Mn(2+) serves as cofactor.

It is found in the cytoplasm. The catalysed reaction is RNA(n+1) + phosphate = RNA(n) + a ribonucleoside 5'-diphosphate. Functionally, involved in mRNA degradation. Catalyzes the phosphorolysis of single-stranded polyribonucleotides processively in the 3'- to 5'-direction. Also involved, along with RNase II, in tRNA processing. RNases II and R contribute to rRNA degradation during starvation, while RNase R and PNPase are the major contributors to quality control of rRNA during steady state growth. Contributes to degradation of some small RNAs (sRNA). This chain is Polyribonucleotide nucleotidyltransferase, found in Escherichia coli (strain K12).